A 570-amino-acid chain; its full sequence is Proline--tRNA ligase (570 aa).

This sequence belongs to the class-II aminoacyl-tRNA synthetase family. ProS type 1 subfamily. As to quaternary structure, homodimer.

It is found in the cytoplasm. The catalysed reaction is tRNA(Pro) + L-proline + ATP = L-prolyl-tRNA(Pro) + AMP + diphosphate. In terms of biological role, catalyzes the attachment of proline to tRNA(Pro) in a two-step reaction: proline is first activated by ATP to form Pro-AMP and then transferred to the acceptor end of tRNA(Pro). As ProRS can inadvertently accommodate and process non-cognate amino acids such as alanine and cysteine, to avoid such errors it has two additional distinct editing activities against alanine. One activity is designated as 'pretransfer' editing and involves the tRNA(Pro)-independent hydrolysis of activated Ala-AMP. The other activity is designated 'posttransfer' editing and involves deacylation of mischarged Ala-tRNA(Pro). The misacylated Cys-tRNA(Pro) is not edited by ProRS. This chain is Proline--tRNA ligase, found in Clostridium beijerinckii (strain ATCC 51743 / NCIMB 8052) (Clostridium acetobutylicum).